The primary structure comprises 472 residues: Argininosuccinate lyase (472 aa).

It belongs to the lyase 1 family. Argininosuccinate lyase subfamily.

The protein localises to the cytoplasm. It carries out the reaction 2-(N(omega)-L-arginino)succinate = fumarate + L-arginine. It participates in amino-acid biosynthesis; L-arginine biosynthesis; L-arginine from L-ornithine and carbamoyl phosphate: step 3/3. In Syntrophus aciditrophicus (strain SB), this protein is Argininosuccinate lyase.